Reading from the N-terminus, the 511-residue chain is Cobyric acid synthase (511 aa).

The 193-residue stretch at 251–443 (LLDIAIICLP…IHGIFDNDVF (193 aa)) folds into the GATase cobBQ-type domain. Cys-332 acts as the Nucleophile in catalysis. Residue His-435 is part of the active site.

The protein belongs to the CobB/CobQ family. CobQ subfamily.

Its pathway is cofactor biosynthesis; adenosylcobalamin biosynthesis. Catalyzes amidations at positions B, D, E, and G on adenosylcobyrinic A,C-diamide. NH(2) groups are provided by glutamine, and one molecule of ATP is hydrogenolyzed for each amidation. In Listeria monocytogenes serotype 4b (strain F2365), this protein is Cobyric acid synthase.